The chain runs to 545 residues: MSRHSQDERLGLPQPPALLPLLLLLLAVAVPLSQAGVYYATAYWMPTEKTIQVKNVLDRKGDAYGFYNNSVKTTGWGILEIKAGYGSQSLSNEIIMFAAGFLEGYLTAPHMDDHFTNLYPQLIKKRSMLNKVQDFLTKQDQWTRENIKYYKSDPFWRHADYVMAQMDGLFAGATKRAVLEGKKPMTLFQIQFLNAIGDLLDLIPSLSPTKNSSLKFFKRWDMGHCSALIKVLPGFENIFFAHSSWYTYAAMLRIYKHWDFNIVDKDTSSSRLSFSSYPGFLESLDDFYLLSSGLVLLQTTNSVYNKTLLQHVVPQSLLAWQRVRVASMMANNGKQWAEVFSKYNSGTYNNQYMVLDLKKVNLNHSLDEGTLYIVEQIPTYVEYSEQTAVLRRGYWPSYNIPFHEKVYNWSGYPILVKKLGLDYSYDLASRAKIFRRDQGKVTDMESMKYIMRYNNYKQDPYSKGDPCNTVCCREDLNSHSPSPGGCYDTKVADIYLASKYKAYAISGPTVQGGLPVFHWSRFNKTLHEGMPEAYNFDFITMKPIL.

Residues 1–35 (MSRHSQDERLGLPQPPALLPLLLLLLAVAVPLSQA) form the signal peptide. Asn-68 carries an N-linked (GlcNAc...) (high mannose) asparagine; alternate glycan. An N-linked (GlcNAc...) (hybrid) asparagine; alternate glycan is attached at Asn-68. Residues 206 to 224 (LSPTKNSSLKFFKRWDMGH) constitute a propeptide, removed in mature form. Asn-305, Asn-363, and Asn-408 each carry an N-linked (GlcNAc...) (high mannose) asparagine; alternate glycan. Asn-305, Asn-363, and Asn-408 each carry an N-linked (GlcNAc...) (hybrid) asparagine; alternate glycan. 2 disulfides stabilise this stretch: Cys-467–Cys-472 and Cys-471–Cys-486. The N-linked (GlcNAc...) (high mannose) asparagine; alternate glycan is linked to Asn-523. An N-linked (GlcNAc...) (hybrid) asparagine; alternate glycan is attached at Asn-523.

The protein belongs to the phospholipase B-like family. May form a homodimer, each monomer is composed of a chain A and a chain B. The maturation cleavages that produces chains A and B are required to open the putative substrate binding pocket. Both chains A and B remain associated in the mature protein.

It localises to the lysosome. Its function is as follows. Exhibits a weak phospholipase activity, acting on various phospholipids, including phosphatidylcholine, phosphatidylinositol, phosphatidylethanolamine and lysophospholipids. However, in view of the small size of the putative binding pocket, it has been proposed that it may act rather as an amidase or a peptidase. The protein is Phospholipase B-like 1 (PLBD1) of Bos taurus (Bovine).